The chain runs to 132 residues: Ubiquinol-cytochrome c reductase complex assembly factor 4 (132 aa).

Residues Met1–Ala15 form the signal peptide. Over Leu16–Lys78 the chain is Mitochondrial matrix. The interval Leu29–His72 is disordered. The helical transmembrane segment at Val79–Leu95 threads the bilayer. At Arg96 to Thr132 the chain is on the mitochondrial intermembrane side. A disordered region spans residues Gly110–Thr132.

It belongs to the UQCC4 family. Forms a complex, named COMB/coordinator of mitochondrial CYTB biogenesis, composed of UQCC1, UQCC2, UQCC4, UQCC5 and UQCC6; stabilizes nascent cytochrome b/MT-CYB and promotes its membrane insertion. Forms a complex, named COMA, composed of UQCC1, UQCC2 and UQCC4; activates MT-CYB translation. Forms a complex, named COMC, composed of UQCC1, UQCC2; UQCC3 and UQCC4; mediates MT-CYB hemylation and association with the first nuclear-encoded complex III subunit UQCRQ. Complexes COMA and COMB are bound to the mitochondrion inner membrane by UQCC4.

It is found in the mitochondrion inner membrane. Functionally, required for the assembly and stability of the mitochondrial ubiquinol-cytochrome c reductase complex (complex III (CIII) or cytochrome b-c1 complex), a multisubunit transmembrane complex that is part of the mitochondrial electron transport chain (ETC) which drives oxidative phosphorylation. This is Ubiquinol-cytochrome c reductase complex assembly factor 4 from Homo sapiens (Human).